Here is a 349-residue protein sequence, read N- to C-terminus: Anthranilate phosphoribosyltransferase (349 aa).

5-phospho-alpha-D-ribose 1-diphosphate contacts are provided by residues Gly-82, 85–86, 92–95, 110–118, and Ser-122; these read GD, NVST, and KHGNRAVSG. Gly-82 is a binding site for anthranilate. A Mg(2+)-binding site is contributed by Ser-94. Residue Asn-113 coordinates anthranilate. Arg-168 provides a ligand contact to anthranilate. 2 residues coordinate Mg(2+): Asp-227 and Glu-228.

It belongs to the anthranilate phosphoribosyltransferase family. In terms of assembly, homodimer. Mg(2+) is required as a cofactor.

The enzyme catalyses N-(5-phospho-beta-D-ribosyl)anthranilate + diphosphate = 5-phospho-alpha-D-ribose 1-diphosphate + anthranilate. It participates in amino-acid biosynthesis; L-tryptophan biosynthesis; L-tryptophan from chorismate: step 2/5. Catalyzes the transfer of the phosphoribosyl group of 5-phosphorylribose-1-pyrophosphate (PRPP) to anthranilate to yield N-(5'-phosphoribosyl)-anthranilate (PRA). This Pseudomonas entomophila (strain L48) protein is Anthranilate phosphoribosyltransferase.